The following is a 2280-amino-acid chain: MVSKPFKPIVLNATFEWQVFKRCYLRVAPREAFCENLSELHHYFARRVNAWLKHATRTLPDGYTFVEEGLLDMFGTKAPDSVQEGTLFRELFGVDQTEQFPLSLADLAKLQGELVDATRTPGHALRQKYTMTTIQDLINKITKVVPVQATLTEMHARRQFERERADLFHELPLVDEDAVSQPKTYFYTMWRQVVKKGKAYFCPLVKTSAWRTKISAITEPIKDFLIAFCQAVQQEMGVNPQYLQLAWLQKLKPTTLTIILQQHKYTVSGWLATMTALVEVYSNLFDDLRKSSVAIVSSIGAFFDICKDFVSQVVELVKTTFTAQGPTDLGWAAVLAGAAMILLKMSGCPGVIGMWTKVLKICGGITTITAAARGVRWLKDLYEEAEGRRLAKMYMARGAALIELAASREVTGIDELKGLLDCFTILIEEGTELIHKFGTSPLAGLVRTYVSELETQANNIRSTIKLDTPRRVPVVIILTGAPGIGKTRLAQYVGQRFGKTSNFSVAVDHHDGYTGNTVCIWDEFDVDSKGAFVETMIGIANTAPFPLNCDRVENKGRVFTSDYVICTSNYPTSVIPDNPRAAAFYRRVLTVDVSAPDLEEWKKRNPGKRPTPDLYQDDFSHLKLMLRPYLGYNPDGDTLEGPRVAPTQISIAGLITLMERRFKEQAGPLQNLWLQVPKTLVEQSTNMVKAFMYANRAVCDVIPNPATRDIAETALTKIFVCGTAPPPEFVGKHIVITGIEVGDASIANSLLSMFTTTTRLSAAAQREYMYRVWSPLIHIQDRSINTQNLPYINRVIPVTSHWDFLRGLRHHLGFTSIPGMWKAFQGWRTSQGIVDFVAHHMADVTFPSNPECTIFRTPDADVVFYTFGSYVCFATPARVPYVGTPPTTIHSNTPRCMTWGETIALLCEVVAEFVLHFGPVILSAANIAYLMTRGSRTEEAKGKTKHGRGMRHGHRAGVSLSDDEYDEWRDLMRDWRRDMSVNDFLMLRERSALGVDDEDEARYRAWLEIRAMRMAGGAYTHATIIGRGGVRDEIIRTAPRRAPTRPQQHYEEEAPTAIVEFTQGGDHIGYGVHIGNGNVITVTHVASTSDEVNGSAFKITRTVGETTWVQGPFSQLPHMQIGSGSPVYFTTRLHPVFTISEGTFETPNITVNGFHVRIMNGYPTKKGDCGLPYFNSNRQLVALHAGTDTQGETKVAQRVVKEVTTQDEFQWKGLPVVKSGLDVGGMPTGTRYHRSPAWPEEQPGETHAPAPFGAGDKRYTFSQTEMLVNGLKPYTEPTAGVPPQLLSRAVTHVRSYIETIIGTHRSPVLTYHQACELLERTTSCGPFVQGLKGDYWDEEQQQYTGVLANHLEQAWDKANKGIAPRNAYKLALKDELRPIEKNKAGKRRLLWGCDAATTLIATAAFKAVATRLQVVTPMTPVAVGINMDSVQMQVMNDSLKGGVLYCLDYSKWDSTQNPAVTAASLAILERFAEPHPIVSCAIEALSSPAEGYVNDIKFVTRGGLPSGMPFTSVVNSINHMIYVAAAILQAYESHNVPYTGNVFQVETVHTYGDDCMYSVCPATASIFHAVLANLTSYGLKPTAADKSDAIKPTNTPVFLKRTFTQTPHGVRALLDITSITRQFYWLKANRTSDPSSPPAFDRQARSAQLENALAYASQHGPVVFDTVRQIAIKTAQGEGLVLVNTNYDQALATYNAWFIGGTVPDPVGHTEGTHKIVFEMEGNGSNPEPKQSNNPMVVDPPGTTGPTTSHVVVANPEQPNGAAQRLELAVATGAIQSNVPEAIRNCFAVFRTFAWNDRMPTGTFLGSISLHPNINPYTAHLSGMWAGWGGSFEVRLSISGSGVFAGRIIASVIPPGVDPSSIRDPGVLPHAFVDARITEPVSFMIPDVRAVDYHRMDGAEPTCSLGFWVYQPLLNPFSTTAVSTCWVSVETKPGGDFDFCLLRPPGQQMENGVSPEGLLPRRLGYSRGNRVGGLVVGMVLVAEHKQVNRHFNSNSVTFGWSTAPVNPMAAEIVTNQAHSTSRHAWLSIGAQNKGPLFPGIPNHFPDSCASTIVGAMDTSLGGRPSTGVCGPAISFQNNGDVYENDTPSVMFATYDPLTSGTGVALTNSINPASLALVRISNNDFDTSGFANDKNVVVQMSWEMYTGTNQIRGQVTPMSGTNYTFTSTGANTLVLWQERMLSYDGHQAILYSSQLERTAEYFQNDIVNIPENSMAVFNVETNSASFQIGIRPDGYMVTGGSIGINVPLEPETRFQYVGILPLSAALSGPSGNMGRARRVFQ.

The 155-residue stretch at 454–608 (ETQANNIRST…EEWKKRNPGK (155 aa)) folds into the SF3 helicase domain. An ATP-binding site is contributed by 480-487 (GAPGIGKT). Tyrosine 965 carries the O-(5'-phospho-RNA)-tyrosine modification. In terms of domain architecture, Peptidase C24 spans 1054–1202 (APTAIVEFTQ…TKVAQRVVKE (149 aa)). Active-site for 3CLpro activity residues include histidine 1084, glutamate 1105, and cysteine 1169. The region spanning 1442-1567 (GVLYCLDYSK…SVCPATASIF (126 aa)) is the RdRp catalytic domain. A disordered region spans residues 1722–1746 (GNGSNPEPKQSNNPMVVDPPGTTGP). Polar residues predominate over residues 1723-1735 (NGSNPEPKQSNNP).

As to quaternary structure, homodimer. Homomultimer. Specific enzymatic cleavages in vivo yield mature proteins. Pro-Pol is first autocatalytically cleaved, then processes the whole polyprotein. In terms of processing, VPg is uridylylated by the polymerase and is covalently attached to the 5'-end of the polyadenylated genomic and subgenomic RNAs. This uridylylated form acts as a nucleotide-peptide primer for the polymerase.

The protein resides in the virion. It localises to the host cytoplasm. The catalysed reaction is a ribonucleoside 5'-triphosphate + H2O = a ribonucleoside 5'-diphosphate + phosphate + H(+). It carries out the reaction RNA(n) + a ribonucleoside 5'-triphosphate = RNA(n+1) + diphosphate. It catalyses the reaction Endopeptidase with a preference for cleavage when the P1 position is occupied by Glu-|-Xaa and the P1' position is occupied by Gly-|-Yaa.. Functionally, together with NTPase and NS4, initiates the formation of the replication complex. Induces the proliferation of the host smooth ER membranes forming long tubular structures. These remodeled membranes probably form the viral factories that contain the replication complex. In terms of biological role, displays NTPase activity, but no helicase activity. Induces the formation of convoluted membranes derived from the host ER. These remodeled membranes probably form the viral factories that contain the replication complex. Together with NS2 and NS4, initiates the formation of the replication complex. Its function is as follows. Probable key protein responsible for the formation of membrane alterations by the virus. Induces the formation of convoluted membranes derived from the host ER. These remodeled membranes probably form the viral factories that contain the replication complex. Together with NS2 and NTPase, initiates the formation of the replication complex. Viral genome-linked protein is covalently linked to the 5'-end of the positive-strand, negative-strand genomic RNAs and subgenomic RNA. Acts as a genome-linked replication primer. May recruit ribosome to viral RNA thereby promoting viral proteins translation. Interacts with host translation initiation complex to allow the translation of viral proteins. Functionally, protease-polymerase p76 processes the polyprotein: Pro-Pol is first released by autocleavage, then all other proteins are cleaved. Cleaves host translation initiation factor eIF4G1, eIF4G2 and PABP1 thereby inducing a shutdown of host protein synthesis. This shutdown may not prevent viral mRNA from being translated since viral Vpg replaces the cap. It is also an RNA-directed RNA polymerase which replicates genomic and antigenomic viral RNA by recognizing specific signals. Also transcribes a subgenomic mRNA by initiating RNA synthesis internally on antigenomic RNA. This sgRNA codes for structural proteins. Catalyzes the covalent attachment VPg with viral RNAs. In terms of biological role, capsid protein self assembles to form an icosahedral capsid with a T=3 symmetry, about 38 nm in diameter, and consisting of 180 capsid proteins. The capsid encapsulate the genomic RNA and VP2 proteins. Attaches virion to target cells, inducing endocytosis of the viral particle. Acidification of the endosome induces conformational change of capsid protein thereby injecting virus genomic RNA into host cytoplasm. This chain is Genome polyprotein, found in Sapporo virus (isolate GI/Human/Germany/pJG-Sap01) (Hu/Dresden/pJG-Sap01/DE).